A 172-amino-acid chain; its full sequence is Ribosome maturation factor RimM (172 aa).

Residues 96–168 (DGEFYYHEII…RIEVELMEGL (73 aa)) form the PRC barrel domain.

It belongs to the RimM family. As to quaternary structure, binds ribosomal protein uS19.

It localises to the cytoplasm. Its function is as follows. An accessory protein needed during the final step in the assembly of 30S ribosomal subunit, possibly for assembly of the head region. Essential for efficient processing of 16S rRNA. May be needed both before and after RbfA during the maturation of 16S rRNA. It has affinity for free ribosomal 30S subunits but not for 70S ribosomes. The polypeptide is Ribosome maturation factor RimM (Streptococcus thermophilus (strain ATCC BAA-491 / LMD-9)).